Here is a 211-residue protein sequence, read N- to C-terminus: Cytochrome c biogenesis ATP-binding export protein CcmA (211 aa).

Residues 17-209 (LDVEDVTVFR…PSLAHVESFW (193 aa)) form the ABC transporter domain. 49–56 (GPNGAGKS) contacts ATP.

Belongs to the ABC transporter superfamily. CcmA exporter (TC 3.A.1.107) family. The complex is composed of two ATP-binding proteins (CcmA) and two transmembrane proteins (CcmB).

The protein localises to the cell inner membrane. The enzyme catalyses heme b(in) + ATP + H2O = heme b(out) + ADP + phosphate + H(+). Functionally, part of the ABC transporter complex CcmAB involved in the biogenesis of c-type cytochromes; once thought to export heme, this seems not to be the case, but its exact role is uncertain. Responsible for energy coupling to the transport system. The protein is Cytochrome c biogenesis ATP-binding export protein CcmA of Gluconobacter oxydans (strain 621H) (Gluconobacter suboxydans).